We begin with the raw amino-acid sequence, 235 residues long: 2-C-methyl-D-erythritol 4-phosphate cytidylyltransferase (235 aa).

This sequence belongs to the IspD/TarI cytidylyltransferase family. IspD subfamily.

The catalysed reaction is 2-C-methyl-D-erythritol 4-phosphate + CTP + H(+) = 4-CDP-2-C-methyl-D-erythritol + diphosphate. It participates in isoprenoid biosynthesis; isopentenyl diphosphate biosynthesis via DXP pathway; isopentenyl diphosphate from 1-deoxy-D-xylulose 5-phosphate: step 2/6. Its function is as follows. Catalyzes the formation of 4-diphosphocytidyl-2-C-methyl-D-erythritol from CTP and 2-C-methyl-D-erythritol 4-phosphate (MEP). The chain is 2-C-methyl-D-erythritol 4-phosphate cytidylyltransferase from Pseudomonas fluorescens (strain ATCC BAA-477 / NRRL B-23932 / Pf-5).